The chain runs to 218 residues: Attacin-B (218 aa).

The signal sequence occupies residues 1–17 (MQKTSILILALFAIAEA). The propeptide occupies 18–28 (VPTTGPIRVRR).

It belongs to the attacin/sarcotoxin-2 family. As to expression, hemolymph (at protein level).

It localises to the secreted. Hemolymph antibacterial protein. The polypeptide is Attacin-B (AttB) (Drosophila melanogaster (Fruit fly)).